The primary structure comprises 87 residues: MIDFIQRVVVTQKSTMLLESERYTFDVDVNLSKTDIKTLIQDLYGVQVVAVNTHRLPRRKTRFGGVKTRTKRAIIRLKNGDTLPIFD.

It belongs to the universal ribosomal protein uL23 family. In terms of assembly, part of the 50S ribosomal subunit.

The protein localises to the plastid. It is found in the chloroplast. Its function is as follows. Binds to 23S rRNA. This chain is Large ribosomal subunit protein uL23c (rpl23), found in Ostreococcus tauri.